Consider the following 76-residue polypeptide: Esculentin-2MT3 (76 aa).

An N-terminal signal peptide occupies residues 1–22 (MFTLKKSMLLLFFLGTISLSLC). Residues 23-37 (EEERNADEDDGEKEV) constitute a propeptide, removed in mature form. Cysteines 70 and 76 form a disulfide.

Belongs to the frog skin active peptide (FSAP) family. Esculentin subfamily. In terms of tissue distribution, expressed by the skin glands.

The protein localises to the secreted. Its function is as follows. Antimicrobial peptide. In Amolops mantzorum (Sichuan torrent frog), this protein is Esculentin-2MT3.